The following is a 243-amino-acid chain: Probable sentrin-specific protease 8 (243 aa).

The interval 12–185 is protease; that stretch reads SAIYQSDINI…LYVLSIIEEL (174 aa). Active-site residues include His109 and Asp126. The Nucleophile role is filled by Cys174.

It belongs to the peptidase C48 family.

In terms of biological role, protease that catalyzes two essential functions in the nedd8 pathway: processing of full-length nedd8 to its mature form and deconjugation of nedd8 from targeted proteins. This is Probable sentrin-specific protease 8 (senp8) from Dictyostelium discoideum (Social amoeba).